Reading from the N-terminus, the 457-residue chain is Nuclear hormone receptor family member nhr-20 (457 aa).

Positions 16 to 92 form a DNA-binding region, nuclear receptor; the sequence is TSKCLVCEHP…AGMRRECVQK (77 aa). NR C4-type zinc fingers lie at residues 19–40 and 56–80; these read CLVCEHPDGGSAHFGSTSCLAC and CKKDKNCVIFHELRMICRACRFDKC. Residues 125–182 are disordered; it reads GDQTDDNSPLSIEKKSPPGLLPNDSPMMADFKFDPSDIPSTSGGSTQRLERSPSPKLA. Positions 162 to 171 are enriched in polar residues; the sequence is IPSTSGGSTQ. The NR LBD domain maps to 201–457; sequence QLKNSMDRRR…DALSKSLLTL (257 aa).

It belongs to the nuclear hormone receptor family.

Its subcellular location is the nucleus. Its function is as follows. Orphan nuclear receptor. The sequence is that of Nuclear hormone receptor family member nhr-20 (nhr-20) from Caenorhabditis elegans.